Consider the following 488-residue polypeptide: Aspartyl/glutamyl-tRNA(Asn/Gln) amidotransferase subunit B (488 aa).

The protein belongs to the GatB/GatE family. GatB subfamily. Heterotrimer of A, B and C subunits.

The catalysed reaction is L-glutamyl-tRNA(Gln) + L-glutamine + ATP + H2O = L-glutaminyl-tRNA(Gln) + L-glutamate + ADP + phosphate + H(+). The enzyme catalyses L-aspartyl-tRNA(Asn) + L-glutamine + ATP + H2O = L-asparaginyl-tRNA(Asn) + L-glutamate + ADP + phosphate + 2 H(+). Its function is as follows. Allows the formation of correctly charged Asn-tRNA(Asn) or Gln-tRNA(Gln) through the transamidation of misacylated Asp-tRNA(Asn) or Glu-tRNA(Gln) in organisms which lack either or both of asparaginyl-tRNA or glutaminyl-tRNA synthetases. The reaction takes place in the presence of glutamine and ATP through an activated phospho-Asp-tRNA(Asn) or phospho-Glu-tRNA(Gln). In Neorickettsia sennetsu (strain ATCC VR-367 / Miyayama) (Ehrlichia sennetsu), this protein is Aspartyl/glutamyl-tRNA(Asn/Gln) amidotransferase subunit B.